The chain runs to 155 residues: Small ribosomal subunit protein uS7 (155 aa).

Belongs to the universal ribosomal protein uS7 family. In terms of assembly, part of the 30S ribosomal subunit. Contacts proteins S9 and S11.

In terms of biological role, one of the primary rRNA binding proteins, it binds directly to 16S rRNA where it nucleates assembly of the head domain of the 30S subunit. Is located at the subunit interface close to the decoding center, probably blocks exit of the E-site tRNA. The polypeptide is Small ribosomal subunit protein uS7 (Fervidobacterium nodosum (strain ATCC 35602 / DSM 5306 / Rt17-B1)).